The sequence spans 281 residues: Ribosomal RNA small subunit methyltransferase I (281 aa).

It belongs to the methyltransferase superfamily. RsmI family.

It is found in the cytoplasm. The enzyme catalyses cytidine(1402) in 16S rRNA + S-adenosyl-L-methionine = 2'-O-methylcytidine(1402) in 16S rRNA + S-adenosyl-L-homocysteine + H(+). Catalyzes the 2'-O-methylation of the ribose of cytidine 1402 (C1402) in 16S rRNA. This chain is Ribosomal RNA small subunit methyltransferase I, found in Erythrobacter litoralis (strain HTCC2594).